The chain runs to 308 residues: Ornithine carbamoyltransferase (308 aa).

Residues serine 51–threonine 54, glutamine 78, arginine 102, and histidine 129–glutamine 132 contribute to the carbamoyl phosphate site. Residues asparagine 160, aspartate 224, and serine 228–methionine 229 each bind L-ornithine. Carbamoyl phosphate-binding positions include cysteine 264 to leucine 265 and arginine 292.

It belongs to the aspartate/ornithine carbamoyltransferase superfamily. OTCase family.

It localises to the cytoplasm. The enzyme catalyses carbamoyl phosphate + L-ornithine = L-citrulline + phosphate + H(+). Its pathway is amino-acid biosynthesis; L-arginine biosynthesis; L-arginine from L-ornithine and carbamoyl phosphate: step 1/3. In terms of biological role, reversibly catalyzes the transfer of the carbamoyl group from carbamoyl phosphate (CP) to the N(epsilon) atom of ornithine (ORN) to produce L-citrulline. This is Ornithine carbamoyltransferase from Caldicellulosiruptor saccharolyticus (strain ATCC 43494 / DSM 8903 / Tp8T 6331).